The chain runs to 465 residues: Deoxyguanosinetriphosphate triphosphohydrolase-like protein (465 aa).

The interval 1–22 is disordered; sequence MKWDKLLNDKRRRESGVTRSKN. In terms of domain architecture, HD spans 63–252; the sequence is RLTHSMEVST…LEVADDIAYL (190 aa).

It belongs to the dGTPase family. Type 3 subfamily.

The protein is Deoxyguanosinetriphosphate triphosphohydrolase-like protein of Listeria innocua serovar 6a (strain ATCC BAA-680 / CLIP 11262).